The sequence spans 130 residues: Albumin-1 B (130 aa).

A signal peptide spans 1-26; sequence MASVKLASLMVLFATLGMFLTKNVGA. Intrachain disulfides connect Cys29–Cys46, Cys33–Cys48, and Cys41–Cys58. 2 propeptides span residues 64 to 69 and 123 to 130; these read VFLRTN and LLKSVSTA.

The C-terminal glycine may be removed from PA1b. Major component of both the cotyledons and embryonic axes of mature seeds.

Its function is as follows. PA1b binds to basic 7S globulin (BG) and stimulates its phosphorylation activity. Involved in the signal transduction system to regulate the growth and differentiation as a hormone peptide. Toxic to various insects through binding to a high affinity binding site in the insect gut. The chain is Albumin-1 B from Pisum sativum (Garden pea).